The chain runs to 345 residues: RDS/peripherin-like protein xRDS35 (345 aa).

The Cytoplasmic segment spans residues 1-24; it reads MVLFKAKFSFQRRVKLAQTLWLLS. A helical transmembrane segment spans residues 25 to 43; sequence WLSVLVGCLTFGMGIFLKV. Topologically, residues 44–61 are lumenal; that stretch reads QLWIHNEVMENTSAHAVP. N-linked (GlcNAc...) asparagine glycosylation is present at asparagine 54. A helical membrane pass occupies residues 62–80; that stretch reads NTVITAGLVGILLGIYAGK. Residues 81–99 are Cytoplasmic-facing; that stretch reads VSQASMDVTKYQRWKSFMM. A helical membrane pass occupies residues 100 to 123; the sequence is PFFFLAILSCLVCLAALVLSVALR. Topologically, residues 124–264 are lumenal; it reads GTLEESLKIG…LSYYTGIMAT (141 aa). The N-linked (GlcNAc...) asparagine glycan is linked to asparagine 229. A helical membrane pass occupies residues 265–290; the sequence is NGAAVTLSFLLQASVLVSLRYLHTSM. The Cytoplasmic segment spans residues 291 to 345; the sequence is DKISGPDDMEADTEGFILEKGVTETMNTTLEKMKGLFMSNQVETAEGGGEAAAAS.

It belongs to the PRPH2/ROM1 family. Homodimer; disulfide-linked. In terms of tissue distribution, rod specific.

It localises to the membrane. This Xenopus laevis (African clawed frog) protein is RDS/peripherin-like protein xRDS35 (rds35).